A 627-amino-acid polypeptide reads, in one-letter code: Zinc cluster transcription factor acuM (627 aa).

Disordered stretches follow at residues 1–40 (MGCR…PARP), 129–148 (NGTA…GTME), 155–193 (AEGD…RRKV), 225–258 (CHDE…FSNA), 277–305 (PDGT…QNSL), and 394–416 (AQPS…PSST). The span at 162–171 (MESGSKNTAS) shows a compositional bias: polar residues. Residues 197–225 (CVYCRRSHMTCDSERPCTRCIKRNIGHLC) constitute a DNA-binding region (zn(2)-C6 fungal-type). Positions 225–251 (CHDEPREPSKRARSEHEHSTAEEDGHS) are enriched in basic and acidic residues. Residues 286–305 (SSVSAVQHNTIPSSSAQNSL) show a composition bias toward polar residues. Positions 394–403 (AQPSQPTQSQ) are enriched in low complexity. Polar residues predominate over residues 404–416 (PHQNDSVQGPSST).

The protein resides in the nucleus. Its function is as follows. Transcription factor that governs genes involved in reductive and siderophore-mediated iron acquisition, and carbon metabolism. Suppresses the expression of sreA and induces hapX to stimulate expression of genes involved in both reductive iron assimilation and siderophore-mediated iron uptake which is essential for the maximal virulence. Also regulates genes involved in gluconeogenesis. The sequence is that of Zinc cluster transcription factor acuM from Aspergillus fumigatus (strain ATCC MYA-4609 / CBS 101355 / FGSC A1100 / Af293) (Neosartorya fumigata).